A 360-amino-acid chain; its full sequence is MTTTLQQRGSASLWEKFCQWITSTENRIYVGWFGVLMIPTLLTATTCFIIAFIAAPPVDIDGIREPVAGSLLYGNNIISGAVVPSSNAIGLHFYPIWEAASLDEWLYNGGPYQLVIFHFLIGVFCYMGREWELSYRLGMRPWICVAFSAPVAAATAVFLIYPIGQGSFSDGMPLGISGTFNFMIVFQAEHNILMHPFHMLGVAGVFGGSLFSAMHGSLVTSSLVRETTETESQNYGYKFGQEEETYNIVAAHGYFGRLIFQYASFNNSRSLHFFLGAWPVVGIWFTALGVSTMAFNLNGFNFNQSILDSQGRVINTWADILNRANLGFEVMHERNAHNFPLDLAAGEQAPVALQAPAING.

Transmembrane regions (helical) follow at residues 29 to 46, 118 to 133, and 142 to 156; these read YVGWFGVLMIPTLLTATT, HFLIGVFCYMGREWEL, and WICVAFSAPVAAATA. H118 provides a ligand contact to chlorophyll a. Y126 is a binding site for pheophytin a. [CaMn4O5] cluster is bound by residues D170 and E189. A helical transmembrane segment spans residues 197–218; sequence FHMLGVAGVFGGSLFSAMHGSL. Position 198 (H198) interacts with chlorophyll a. A quinone is bound by residues H215 and 264 to 265; that span reads SF. H215 is a binding site for Fe cation. Position 272 (H272) interacts with Fe cation. Residues 274 to 288 form a helical membrane-spanning segment; that stretch reads FLGAWPVVGIWFTAL. Positions 332, 333, 342, and 344 each coordinate [CaMn4O5] cluster. The propeptide occupies 345-360; the sequence is AGEQAPVALQAPAING.

Belongs to the reaction center PufL/M/PsbA/D family. In terms of assembly, PSII is composed of 1 copy each of membrane proteins PsbA, PsbB, PsbC, PsbD, PsbE, PsbF, PsbH, PsbI, PsbJ, PsbK, PsbL, PsbM, PsbT, PsbX, PsbY, PsbZ, Psb30/Ycf12, peripheral proteins PsbO, CyanoQ (PsbQ), PsbU, PsbV and a large number of cofactors. It forms dimeric complexes. The cofactor is The D1/D2 heterodimer binds P680, chlorophylls that are the primary electron donor of PSII, and subsequent electron acceptors. It shares a non-heme iron and each subunit binds pheophytin, quinone, additional chlorophylls, carotenoids and lipids. D1 provides most of the ligands for the Mn4-Ca-O5 cluster of the oxygen-evolving complex (OEC). There is also a Cl(-1) ion associated with D1 and D2, which is required for oxygen evolution. The PSII complex binds additional chlorophylls, carotenoids and specific lipids.. Tyr-161 forms a radical intermediate that is referred to as redox-active TyrZ, YZ or Y-Z. Post-translationally, C-terminally processed by CtpA; processing is essential to allow assembly of the oxygen-evolving complex and thus photosynthetic growth.

It is found in the cellular thylakoid membrane. The catalysed reaction is 2 a plastoquinone + 4 hnu + 2 H2O = 2 a plastoquinol + O2. In terms of biological role, photosystem II (PSII) is a light-driven water:plastoquinone oxidoreductase that uses light energy to abstract electrons from H(2)O, generating O(2) and a proton gradient subsequently used for ATP formation. It consists of a core antenna complex that captures photons, and an electron transfer chain that converts photonic excitation into a charge separation. The D1/D2 (PsbA/PsbD) reaction center heterodimer binds P680, the primary electron donor of PSII as well as several subsequent electron acceptors. This chain is Photosystem II protein D1 1, found in Picosynechococcus sp. (strain ATCC 27264 / PCC 7002 / PR-6) (Agmenellum quadruplicatum).